A 118-amino-acid chain; its full sequence is UPF0102 protein Dtur_1530 (118 aa).

Belongs to the UPF0102 family.

The protein is UPF0102 protein Dtur_1530 of Dictyoglomus turgidum (strain DSM 6724 / Z-1310).